A 181-amino-acid polypeptide reads, in one-letter code: Adenine phosphoribosyltransferase (181 aa).

This sequence belongs to the purine/pyrimidine phosphoribosyltransferase family. As to quaternary structure, homodimer.

It is found in the cytoplasm. It catalyses the reaction AMP + diphosphate = 5-phospho-alpha-D-ribose 1-diphosphate + adenine. It participates in purine metabolism; AMP biosynthesis via salvage pathway; AMP from adenine: step 1/1. Catalyzes a salvage reaction resulting in the formation of AMP, that is energically less costly than de novo synthesis. In Brucella anthropi (strain ATCC 49188 / DSM 6882 / CCUG 24695 / JCM 21032 / LMG 3331 / NBRC 15819 / NCTC 12168 / Alc 37) (Ochrobactrum anthropi), this protein is Adenine phosphoribosyltransferase.